The primary structure comprises 1183 residues: DNA-directed RNA polymerase subunit beta (1183 aa).

Belongs to the RNA polymerase beta chain family. The RNAP catalytic core consists of 2 alpha, 1 beta, 1 beta' and 1 omega subunit. When a sigma factor is associated with the core the holoenzyme is formed, which can initiate transcription.

It catalyses the reaction RNA(n) + a ribonucleoside 5'-triphosphate = RNA(n+1) + diphosphate. Functionally, DNA-dependent RNA polymerase catalyzes the transcription of DNA into RNA using the four ribonucleoside triphosphates as substrates. The polypeptide is DNA-directed RNA polymerase subunit beta (Staphylococcus aureus (strain Mu3 / ATCC 700698)).